Here is a 459-residue protein sequence, read N- to C-terminus: tRNA modification GTPase MnmE (459 aa).

Residues Arg-23, Glu-86, and Arg-125 each contribute to the (6S)-5-formyl-5,6,7,8-tetrahydrofolate site. One can recognise a TrmE-type G domain in the interval 221–380 (GIDAVIIGKP…LENAITELFV (160 aa)). Asn-231 provides a ligand contact to K(+). GTP contacts are provided by residues 231–236 (NVGKSS), 250–256 (TDIPGTT), and 275–278 (DTAG). A Mg(2+)-binding site is contributed by Ser-235. Residues Thr-250, Ile-252, and Thr-255 each contribute to the K(+) site. Thr-256 contacts Mg(2+). Lys-459 is a binding site for (6S)-5-formyl-5,6,7,8-tetrahydrofolate.

It belongs to the TRAFAC class TrmE-Era-EngA-EngB-Septin-like GTPase superfamily. TrmE GTPase family. As to quaternary structure, homodimer. Heterotetramer of two MnmE and two MnmG subunits. It depends on K(+) as a cofactor.

It localises to the cytoplasm. Exhibits a very high intrinsic GTPase hydrolysis rate. Involved in the addition of a carboxymethylaminomethyl (cmnm) group at the wobble position (U34) of certain tRNAs, forming tRNA-cmnm(5)s(2)U34. This Acetivibrio thermocellus (strain ATCC 27405 / DSM 1237 / JCM 9322 / NBRC 103400 / NCIMB 10682 / NRRL B-4536 / VPI 7372) (Clostridium thermocellum) protein is tRNA modification GTPase MnmE.